Reading from the N-terminus, the 206-residue chain is Urease accessory protein UreG (206 aa).

11–18 (GPVGSGKT) is a binding site for GTP.

This sequence belongs to the SIMIBI class G3E GTPase family. UreG subfamily. As to quaternary structure, homodimer. UreD, UreF and UreG form a complex that acts as a GTP-hydrolysis-dependent molecular chaperone, activating the urease apoprotein by helping to assemble the nickel containing metallocenter of UreC. The UreE protein probably delivers the nickel.

It is found in the cytoplasm. Facilitates the functional incorporation of the urease nickel metallocenter. This process requires GTP hydrolysis, probably effectuated by UreG. This Mycolicibacterium gilvum (strain PYR-GCK) (Mycobacterium gilvum (strain PYR-GCK)) protein is Urease accessory protein UreG.